A 255-amino-acid polypeptide reads, in one-letter code: Indole-3-glycerol phosphate synthase (255 aa).

Belongs to the TrpC family.

The catalysed reaction is 1-(2-carboxyphenylamino)-1-deoxy-D-ribulose 5-phosphate + H(+) = (1S,2R)-1-C-(indol-3-yl)glycerol 3-phosphate + CO2 + H2O. The protein operates within amino-acid biosynthesis; L-tryptophan biosynthesis; L-tryptophan from chorismate: step 4/5. The protein is Indole-3-glycerol phosphate synthase of Streptococcus thermophilus (strain ATCC BAA-250 / LMG 18311).